Here is a 316-residue protein sequence, read N- to C-terminus: WEB family protein At3g13190 (316 aa).

Coiled-coil stretches lie at residues 42–90, 119–195, and 233–266; these read WNKE…MIND, EEES…AEEH, and RDET…MAQE. The interval 295–316 is disordered; it reads STKEVLKSKPRSSSKEGCLVKC.

Belongs to the WEB family.

This is WEB family protein At3g13190 from Arabidopsis thaliana (Mouse-ear cress).